The chain runs to 375 residues: Beta sliding clamp (375 aa).

This sequence belongs to the beta sliding clamp family. Forms a ring-shaped head-to-tail homodimer around DNA which binds and tethers DNA polymerases and other proteins to the DNA. The DNA replisome complex has a single clamp-loading complex (3 tau and 1 each of delta, delta', psi and chi subunits) which binds 3 Pol III cores (1 core on the leading strand and 2 on the lagging strand) each with a beta sliding clamp dimer. Additional proteins in the replisome are other copies of gamma, psi and chi, Ssb, DNA helicase and RNA primase.

The protein localises to the cytoplasm. Functionally, confers DNA tethering and processivity to DNA polymerases and other proteins. Acts as a clamp, forming a ring around DNA (a reaction catalyzed by the clamp-loading complex) which diffuses in an ATP-independent manner freely and bidirectionally along dsDNA. Initially characterized for its ability to contact the catalytic subunit of DNA polymerase III (Pol III), a complex, multichain enzyme responsible for most of the replicative synthesis in bacteria; Pol III exhibits 3'-5' exonuclease proofreading activity. The beta chain is required for initiation of replication as well as for processivity of DNA replication. The protein is Beta sliding clamp (dnaN) of Mycoplasma capricolum subsp. capricolum (strain California kid / ATCC 27343 / NCTC 10154).